Reading from the N-terminus, the 93-residue chain is Pyrimidine/purine nucleoside phosphorylase (93 aa).

Belongs to the nucleoside phosphorylase PpnP family.

It catalyses the reaction a purine D-ribonucleoside + phosphate = a purine nucleobase + alpha-D-ribose 1-phosphate. The enzyme catalyses adenosine + phosphate = alpha-D-ribose 1-phosphate + adenine. It carries out the reaction cytidine + phosphate = cytosine + alpha-D-ribose 1-phosphate. The catalysed reaction is guanosine + phosphate = alpha-D-ribose 1-phosphate + guanine. It catalyses the reaction inosine + phosphate = alpha-D-ribose 1-phosphate + hypoxanthine. The enzyme catalyses thymidine + phosphate = 2-deoxy-alpha-D-ribose 1-phosphate + thymine. It carries out the reaction uridine + phosphate = alpha-D-ribose 1-phosphate + uracil. The catalysed reaction is xanthosine + phosphate = alpha-D-ribose 1-phosphate + xanthine. Catalyzes the phosphorolysis of diverse nucleosides, yielding D-ribose 1-phosphate and the respective free bases. Can use uridine, adenosine, guanosine, cytidine, thymidine, inosine and xanthosine as substrates. Also catalyzes the reverse reactions. The polypeptide is Pyrimidine/purine nucleoside phosphorylase (Pseudoalteromonas atlantica (strain T6c / ATCC BAA-1087)).